Here is a 316-residue protein sequence, read N- to C-terminus: 4-hydroxy-3-methylbut-2-enyl diphosphate reductase (316 aa).

Cysteine 12 provides a ligand contact to [4Fe-4S] cluster. (2E)-4-hydroxy-3-methylbut-2-enyl diphosphate is bound by residues histidine 41 and histidine 74. Dimethylallyl diphosphate-binding residues include histidine 41 and histidine 74. Isopentenyl diphosphate contacts are provided by histidine 41 and histidine 74. Residue cysteine 96 coordinates [4Fe-4S] cluster. Histidine 124 provides a ligand contact to (2E)-4-hydroxy-3-methylbut-2-enyl diphosphate. Residue histidine 124 coordinates dimethylallyl diphosphate. Histidine 124 serves as a coordination point for isopentenyl diphosphate. Residue glutamate 126 is the Proton donor of the active site. Threonine 167 contributes to the (2E)-4-hydroxy-3-methylbut-2-enyl diphosphate binding site. [4Fe-4S] cluster is bound at residue cysteine 197. (2E)-4-hydroxy-3-methylbut-2-enyl diphosphate contacts are provided by serine 225, serine 226, asparagine 227, and serine 269. Serine 225, serine 226, asparagine 227, and serine 269 together coordinate dimethylallyl diphosphate. 4 residues coordinate isopentenyl diphosphate: serine 225, serine 226, asparagine 227, and serine 269.

Belongs to the IspH family. In terms of assembly, homodimer. Requires [4Fe-4S] cluster as cofactor.

The enzyme catalyses isopentenyl diphosphate + 2 oxidized [2Fe-2S]-[ferredoxin] + H2O = (2E)-4-hydroxy-3-methylbut-2-enyl diphosphate + 2 reduced [2Fe-2S]-[ferredoxin] + 2 H(+). It carries out the reaction dimethylallyl diphosphate + 2 oxidized [2Fe-2S]-[ferredoxin] + H2O = (2E)-4-hydroxy-3-methylbut-2-enyl diphosphate + 2 reduced [2Fe-2S]-[ferredoxin] + 2 H(+). The protein operates within isoprenoid biosynthesis; dimethylallyl diphosphate biosynthesis; dimethylallyl diphosphate from (2E)-4-hydroxy-3-methylbutenyl diphosphate: step 1/1. It functions in the pathway isoprenoid biosynthesis; isopentenyl diphosphate biosynthesis via DXP pathway; isopentenyl diphosphate from 1-deoxy-D-xylulose 5-phosphate: step 6/6. In terms of biological role, catalyzes the conversion of 1-hydroxy-2-methyl-2-(E)-butenyl 4-diphosphate (HMBPP) into a mixture of isopentenyl diphosphate (IPP) and dimethylallyl diphosphate (DMAPP). Acts in the terminal step of the DOXP/MEP pathway for isoprenoid precursor biosynthesis. The protein is 4-hydroxy-3-methylbut-2-enyl diphosphate reductase of Salmonella paratyphi C (strain RKS4594).